Here is a 332-residue protein sequence, read N- to C-terminus: Aquaporin-7-2 (332 aa).

Polar residues predominate over residues 1–40; it reads MSGQHQITEQPSGNPLSRTSTLIQEKPLTPTSSHAGTQKQ. Positions 1–46 are disordered; sequence MSGQHQITEQPSGNPLSRTSTLIQEKPLTPTSSHAGTQKQPEAPRQ. Residues 1–66 lie on the Cytoplasmic side of the membrane; it reads MSGQHQITEQ…RHAIRKPMAE (66 aa). Residues 67–87 form a helical membrane-spanning segment; sequence FFGVALLIIFGAGSACQVVLS. Over 88 to 100 the chain is Extracellular; sequence TNPDVASSARGSF. Residues 101 to 121 traverse the membrane as a helical segment; sequence LSINFGWAIGIAMGVWVSGGI. Residues 122–144 are Cytoplasmic-facing; that stretch reads SGGHINPAITIAMATYRGFPWCK. The NPA 1 motif lies at 127–129; it reads NPA. Residues 145-165 form a helical membrane-spanning segment; sequence VPSYILAQVLGGVVGAALVYA. The Extracellular segment spans residues 166-199; sequence NYIHAIDVFEGGHHIRTEATASLFATYALPYMTQ. Residues 200–220 form a helical membrane-spanning segment; the sequence is ASCFFSEFLATAVLSMMVFAL. The Cytoplasmic segment spans residues 221-230; it reads TDKRNHSPTN. The helical transmembrane segment at 231 to 251 threads the bilayer; that stretch reads GLLPFALFILFVGLGASLGME. Residues 252-283 lie on the Extracellular side of the membrane; that stretch reads TAYALNPARDFGPRLFLAMAGYGKALFNYRSQ. The short motif at 257 to 259 is the NPA 2 element; it reads NPA. Residues 284-304 form a helical membrane-spanning segment; it reads YWLWAPIIAPVLGAQAGGLLY. The Cytoplasmic segment spans residues 305–332; it reads DTFLNDGDNSPIKWRCASSQEQQLAEVV.

This sequence belongs to the MIP/aquaporin (TC 1.A.8) family.

The protein localises to the membrane. It carries out the reaction H2O(in) = H2O(out). Its function is as follows. Water channel required to facilitate the transport of water across membranes. Does not mediate the transport carbon dioxide across the membrane. In Laccaria bicolor (Bicoloured deceiver), this protein is Aquaporin-7-2.